The sequence spans 436 residues: UPF0597 protein YhaM (436 aa).

This sequence belongs to the UPF0597 family.

The sequence is that of UPF0597 protein YhaM from Salmonella paratyphi C (strain RKS4594).